We begin with the raw amino-acid sequence, 318 residues long: Methionyl-tRNA formyltransferase (318 aa).

110–113 (SLLP) contacts (6S)-5,6,7,8-tetrahydrofolate.

Belongs to the Fmt family.

The catalysed reaction is L-methionyl-tRNA(fMet) + (6R)-10-formyltetrahydrofolate = N-formyl-L-methionyl-tRNA(fMet) + (6S)-5,6,7,8-tetrahydrofolate + H(+). Attaches a formyl group to the free amino group of methionyl-tRNA(fMet). The formyl group appears to play a dual role in the initiator identity of N-formylmethionyl-tRNA by promoting its recognition by IF2 and preventing the misappropriation of this tRNA by the elongation apparatus. The polypeptide is Methionyl-tRNA formyltransferase (Lacticaseibacillus paracasei (strain ATCC 334 / BCRC 17002 / CCUG 31169 / CIP 107868 / KCTC 3260 / NRRL B-441) (Lactobacillus paracasei)).